Here is a 404-residue protein sequence, read N- to C-terminus: Cysteine desulfurase IscS (404 aa).

Pyridoxal 5'-phosphate is bound by residues 75–76 (AT), N155, Q183, and 203–205 (SGH). K206 is subject to N6-(pyridoxal phosphate)lysine. T243 lines the pyridoxal 5'-phosphate pocket. C328 acts as the Cysteine persulfide intermediate in catalysis. A [2Fe-2S] cluster-binding site is contributed by C328.

This sequence belongs to the class-V pyridoxal-phosphate-dependent aminotransferase family. NifS/IscS subfamily. As to quaternary structure, homodimer. Forms a heterotetramer with IscU, interacts with other sulfur acceptors. Requires pyridoxal 5'-phosphate as cofactor.

It localises to the cytoplasm. The enzyme catalyses (sulfur carrier)-H + L-cysteine = (sulfur carrier)-SH + L-alanine. It participates in cofactor biosynthesis; iron-sulfur cluster biosynthesis. In terms of biological role, master enzyme that delivers sulfur to a number of partners involved in Fe-S cluster assembly, tRNA modification or cofactor biosynthesis. Catalyzes the removal of elemental sulfur atoms from cysteine to produce alanine. Functions as a sulfur delivery protein for Fe-S cluster synthesis onto IscU, an Fe-S scaffold assembly protein, as well as other S acceptor proteins. This Shewanella baltica (strain OS223) protein is Cysteine desulfurase IscS.